Here is a 406-residue protein sequence, read N- to C-terminus: uncharacterized protein (406 aa).

5 consecutive transmembrane segments (helical) span residues 7 to 27, 31 to 51, 65 to 85, 92 to 112, and 191 to 211; these read LCTN…YYLF, YFNI…YGSV, LIFI…SEII, IFYF…SFIL, and ISLI…SSFF. Positions 259-331 are disordered; the sequence is TLNVPISTNN…TGTNNNVVDN (73 aa). Residues 262–291 are compositionally biased toward polar residues; the sequence is VPISTNNTDNLNSVKTNQQFNTPVAKSNTK. Residues 292–303 show a composition bias toward basic residues; that stretch reads SNRRKKTGKKIR. Over residues 306-318 the composition is skewed to low complexity; sequence NQTTSSNSSNNQS. Residues 319–330 show a composition bias toward polar residues; that stretch reads PESTGTNNNVVD.

The protein localises to the membrane. This is an uncharacterized protein from Acanthamoeba polyphaga (Amoeba).